The sequence spans 370 residues: Chorismate synthase (370 aa).

The NADP(+) site is built by arginine 48 and arginine 54. FMN is bound by residues 130–132 (RSS), 242–243 (NA), glycine 287, 302–306 (KPTSS), and arginine 328.

The protein belongs to the chorismate synthase family. Homotetramer. FMNH2 serves as cofactor.

It carries out the reaction 5-O-(1-carboxyvinyl)-3-phosphoshikimate = chorismate + phosphate. It functions in the pathway metabolic intermediate biosynthesis; chorismate biosynthesis; chorismate from D-erythrose 4-phosphate and phosphoenolpyruvate: step 7/7. In terms of biological role, catalyzes the anti-1,4-elimination of the C-3 phosphate and the C-6 proR hydrogen from 5-enolpyruvylshikimate-3-phosphate (EPSP) to yield chorismate, which is the branch point compound that serves as the starting substrate for the three terminal pathways of aromatic amino acid biosynthesis. This reaction introduces a second double bond into the aromatic ring system. In Xanthobacter autotrophicus (strain ATCC BAA-1158 / Py2), this protein is Chorismate synthase.